The sequence spans 300 residues: N-acetylmuramic acid 6-phosphate etherase 1 (300 aa).

The 164-residue stretch at isoleucine 57–lysine 220 folds into the SIS domain. Residue glutamate 85 is the Proton donor of the active site. Glutamate 116 is an active-site residue.

It belongs to the GCKR-like family. MurNAc-6-P etherase subfamily. In terms of assembly, homodimer.

The enzyme catalyses N-acetyl-D-muramate 6-phosphate + H2O = N-acetyl-D-glucosamine 6-phosphate + (R)-lactate. It participates in amino-sugar metabolism; 1,6-anhydro-N-acetylmuramate degradation. It functions in the pathway amino-sugar metabolism; N-acetylmuramate degradation. The protein operates within cell wall biogenesis; peptidoglycan recycling. Specifically catalyzes the cleavage of the D-lactyl ether substituent of MurNAc 6-phosphate, producing GlcNAc 6-phosphate and D-lactate. Together with AnmK, is also required for the utilization of anhydro-N-acetylmuramic acid (anhMurNAc) either imported from the medium or derived from its own cell wall murein, and thus plays a role in cell wall recycling. In Vibrio cholerae serotype O1 (strain ATCC 39315 / El Tor Inaba N16961), this protein is N-acetylmuramic acid 6-phosphate etherase 1.